Consider the following 1309-residue polypeptide: DNA repair protein RAD9 (1309 aa).

Residues 1–19 are compositionally biased toward polar residues; that stretch reads MSGQLVQWKSSPDRVTQSA. The tract at residues 1–39 is disordered; the sequence is MSGQLVQWKSSPDRVTQSAIKEALHSPLADGDMNEMNVP. Ser26, Ser56, and Ser205 each carry phosphoserine. Thr218 is subject to Phosphothreonine. Phosphoserine is present on Ser248. Positions 280–299 are disordered; that stretch reads NIGAIEEKNPVKKKSENYSS. The segment covering 284-299 has biased composition (basic and acidic residues); that stretch reads IEEKNPVKKKSENYSS. Residues Ser312 and Ser315 each carry the phosphoserine modification. The segment at 342 to 365 is disordered; sequence NSAVSGTPSRNNAEEEMYSSESVN. A compositionally biased stretch (polar residues) spans 343–352; it reads SAVSGTPSRN. Residue Ser462 is modified to Phosphoserine. Residues Thr471 and Thr474 each carry the phosphothreonine modification. The tract at residues 490-512 is disordered; sequence PETSSPSKNTMSKPSNSSPIPKE. Residues 491–508 are compositionally biased toward polar residues; that stretch reads ETSSPSKNTMSKPSNSSP. A Phosphoserine modification is found at Ser568. 2 disordered regions span residues 636-655 and 691-731; these read KGNS…DKQD and IIQN…NSDL. Residues 642–655 are compositionally biased toward basic and acidic residues; sequence LHDDNKECNSDKQD. Position 729 is a phosphoserine (Ser729). A BRCT domain is found at 994–1122; it reads RTGNVFDKCI…RIVPHLIYQY (129 aa).

Physically associates with RAD53.

It is found in the nucleus. Functionally, essential for cell cycle arrest at the G2 stage following DNA damage by X-irradiation or inactivation of DNA ligase. The protein is DNA repair protein RAD9 (RAD9) of Saccharomyces cerevisiae (strain ATCC 204508 / S288c) (Baker's yeast).